Consider the following 385-residue polypeptide: Putative actin-25 (385 aa).

The protein belongs to the actin family.

The protein resides in the cytoplasm. It localises to the cytoskeleton. It carries out the reaction ATP + H2O = ADP + phosphate + H(+). In terms of biological role, actins are highly conserved proteins that are involved in various types of cell motility and are ubiquitously expressed in all eukaryotic cells. Multiple isoforms are involved in various cellular functions such as cytoskeleton structure, cell mobility, chromosome movement and muscle contraction. The protein is Putative actin-25 (act25) of Dictyostelium discoideum (Social amoeba).